The following is a 342-amino-acid chain: Aromatic amino acid aminotransferase (342 aa).

Lys214 is modified (N6-(pyridoxal phosphate)lysine).

This sequence belongs to the class-II pyridoxal-phosphate-dependent aminotransferase family. As to quaternary structure, homodimer. Pyridoxal 5'-phosphate is required as a cofactor.

It carries out the reaction an aromatic L-alpha-amino acid + 2-oxoglutarate = an aromatic oxo-acid + L-glutamate. In terms of biological role, aminotransferase that catalyzes the conversion of aromatic amino acids and 2-oxoglutarate into corresponding aromatic oxo acids and L-glutamate. The chain is Aromatic amino acid aminotransferase from Corynebacterium efficiens (strain DSM 44549 / YS-314 / AJ 12310 / JCM 11189 / NBRC 100395).